The chain runs to 355 residues: Squamosa promoter-binding protein-like 15 (355 aa).

Positions 1–27 are disordered; it reads MELLKGSGLNQTESGGSSSTESSSLSG. Positions 12–27 are enriched in low complexity; the sequence is TESGGSSSTESSSLSG. Residues 61–138 form an SBP-type zinc finger; it reads TARCQVEGCR…ACHNERRRKP (78 aa). Residues cysteine 64, cysteine 69, cysteine 86, histidine 89, cysteine 105, cysteine 108, histidine 112, and cysteine 124 each coordinate Zn(2+). Residues 121–137 carry the Bipartite nuclear localization signal motif; that stretch reads KRSCRRRLACHNERRRK.

The protein resides in the nucleus. Its function is as follows. Probable transcription factor required for the flowering response to vernalization in the shoot apical meristem (SAM). Defines the competence of shoot meristems to flower in response to vernalization in perennials. The protein is Squamosa promoter-binding protein-like 15 of Arabis alpina (Alpine rock-cress).